We begin with the raw amino-acid sequence, 370 residues long: Death-associated protein kinase 2 (370 aa).

One can recognise a Protein kinase domain in the interval 23 to 285 (YDIGEELGSG…IQEALRHPWI (263 aa)). ATP-binding positions include 29 to 37 (LGSGQFAIV) and lysine 52. The Proton acceptor role is filled by aspartate 149. The segment at 287–354 (PVDTQQAMVR…RNCESDTEEN (68 aa)) is calmodulin-binding. Residues 292–301 (QAMVRRESVV) are autoinhibitory domain. Serine 299 carries the phosphoserine modification. Serine 318 is subject to Phosphoserine; by autocatalysis. Position 349 is a phosphoserine (serine 349). Threonine 369 is subject to Phosphothreonine.

Belongs to the protein kinase superfamily. CAMK Ser/Thr protein kinase family. DAP kinase subfamily. In terms of assembly, homodimer in its autoinhibited state. Active as monomer. Interacts with 14-3-3 proteins YWHAB, YWHAE, YWHAG, YWHAH, YWHAQ, YWHAZ and SFN; the interaction requires DAPK2 phosphorylation at Thr-369 and suppresses DAPK2 kinase activity and DAPK2-induced apoptosis. The cofactor is Mg(2+). In terms of processing, autophosphorylation at Ser-318 inhibits its catalytic activity. Dephosphorylated at Ser-318 in response to activated Fas and TNF-alpha receptors. In terms of tissue distribution, expressed in peritubular interstitial cells of the renal cortex. Isoform 1 is found in the adult brain while isoform 2 is expressed in brains of embryos and young mice (at protein level).

Its subcellular location is the cytoplasm. The protein resides in the cytoplasmic vesicle. It is found in the autophagosome lumen. It catalyses the reaction L-seryl-[protein] + ATP = O-phospho-L-seryl-[protein] + ADP + H(+). It carries out the reaction L-threonyl-[protein] + ATP = O-phospho-L-threonyl-[protein] + ADP + H(+). Activated by Ca(2+)/calmodulin. Regulated by a double locking mechanism, involving autophosphorylation at Ser-318, calmodulin binding, and dimerization. In the inactive state, Ser-318 is phosphorylated, and the kinase is dimeric. Activation involves: dephosphorylation at Ser-318, release-of-autoinhibition mechanism where calmodulin binding induces a conformational change that relieves the steric block of the active site by the autoinhibitory domain, and generation of the monomeric active form of the kinase. Functionally, calcium/calmodulin-dependent serine/threonine kinase involved in multiple cellular signaling pathways that trigger cell survival, apoptosis, and autophagy. Capable of regulating both type I apoptotic and type II autophagic cell death signals. The former involves caspase activation, chromatin and mitochondrial condensation while the latter involves caspase-independent cell death in conjunction with accumulation of mature autophagic vesicles, plasma membrane blebs, and nuclear condensation without DNA degradation. Mediator of anoikis and a suppressor of beta-catenin-dependent anchorage-independent growth of malignant epithelial cells. May play a role in granulocytic maturation. Regulates granulocytes motility by controlling cell spreading and polarization. In Mus musculus (Mouse), this protein is Death-associated protein kinase 2 (Dapk2).